A 324-amino-acid polypeptide reads, in one-letter code: 3'-5' exoribonuclease YhaM (324 aa).

Residues 163 to 279 (HVVSMLELAK…LHYIDNLDAK (117 aa)) form the HD domain.

This sequence belongs to the YhaM family.

Functionally, shows a 3'-5' exoribonuclease activity. The polypeptide is 3'-5' exoribonuclease YhaM (Geobacillus sp. (strain WCH70)).